The following is a 315-amino-acid chain: G-box-binding factor 1 (315 aa).

Disordered regions lie at residues 1-56 and 93-268; these read MGTS…GSPS and MPMP…RDEL. Over residues 46 to 56 the composition is skewed to pro residues; that stretch reads PFFPSPVGSPS. Composition is skewed to polar residues over residues 133-164 and 178-187; these read GSGNDGASHSDESVTAGSSDENDENANQQEQG and ASSQSTTGEI. The region spanning 222-285 is the bZIP domain; it reads ELKRQKRKQS…DKLKSENNSI (64 aa). The tract at residues 224–243 is basic motif; the sequence is KRQKRKQSNRESARRSRLRK. Positions 249-262 are enriched in polar residues; the sequence is QLQQRVESLSNENQ. The segment at 250 to 285 is leucine-zipper; that stretch reads LQQRVESLSNENQSLRDELQRLSSECDKLKSENNSI.

Belongs to the bZIP family. In terms of assembly, monomer and heterodimers with BZIP16 and BZIP68. Interacts with GIP1. In terms of processing, phosphorylated by CK2. In terms of tissue distribution, found in both light and dark grown leaves.

The protein resides in the nucleus. Its function is as follows. Binds to the G-box motif (5'-CCACGTGG-3') of the rbcS-1A gene promoter. G-box and G-box-like motifs are cis-acting elements defined in promoters of certain plant genes which are regulated by such diverse stimuli as light-induction or hormone control. Binds to the G-box motif 5'-CACGTG-3' of LHCB2.4 (At3g27690) promoter. May act as transcriptional activator in light-regulated expression of LHCB2.4. Probably binds DNA as monomer. DNA-binding activity is redox-dependent. The sequence is that of G-box-binding factor 1 (GBF1) from Arabidopsis thaliana (Mouse-ear cress).